We begin with the raw amino-acid sequence, 251 residues long: ATP synthase subunit a (251 aa).

Transmembrane regions (helical) follow at residues 14-34 (GFVK…LLAV), 78-98 (YLPF…FAVF), 107-127 (SLST…FYGI), 174-194 (MILA…MGVL), and 196-216 (LLIG…YIAA). The interval 224–251 (NAGASDDEGGEDAKSACAAGGKICKHKP) is disordered.

Belongs to the ATPase A chain family. F-type ATPases have 2 components, CF(1) - the catalytic core - and CF(0) - the membrane proton channel. CF(1) has five subunits: alpha(3), beta(3), gamma(1), delta(1), epsilon(1). CF(0) has three main subunits: a(1), b(2) and c(9-12). The alpha and beta chains form an alternating ring which encloses part of the gamma chain. CF(1) is attached to CF(0) by a central stalk formed by the gamma and epsilon chains, while a peripheral stalk is formed by the delta and b chains.

Its subcellular location is the cell inner membrane. Functionally, key component of the proton channel; it plays a direct role in the translocation of protons across the membrane. This Nitrosospira multiformis (strain ATCC 25196 / NCIMB 11849 / C 71) protein is ATP synthase subunit a.